Here is a 560-residue protein sequence, read N- to C-terminus: Dihydroxy-acid dehydratase (560 aa).

Cys52 contributes to the [2Fe-2S] cluster binding site. A Mg(2+)-binding site is contributed by Asp84. A [2Fe-2S] cluster-binding site is contributed by Cys125. Positions 126 and 127 each coordinate Mg(2+). An N6-carboxylysine modification is found at Lys127. Residue Cys197 coordinates [2Fe-2S] cluster. A Mg(2+)-binding site is contributed by Glu448. Catalysis depends on Ser474, which acts as the Proton acceptor.

The protein belongs to the IlvD/Edd family. As to quaternary structure, homodimer. [2Fe-2S] cluster serves as cofactor. It depends on Mg(2+) as a cofactor.

It carries out the reaction (2R)-2,3-dihydroxy-3-methylbutanoate = 3-methyl-2-oxobutanoate + H2O. The catalysed reaction is (2R,3R)-2,3-dihydroxy-3-methylpentanoate = (S)-3-methyl-2-oxopentanoate + H2O. The protein operates within amino-acid biosynthesis; L-isoleucine biosynthesis; L-isoleucine from 2-oxobutanoate: step 3/4. It participates in amino-acid biosynthesis; L-valine biosynthesis; L-valine from pyruvate: step 3/4. Functionally, functions in the biosynthesis of branched-chain amino acids. Catalyzes the dehydration of (2R,3R)-2,3-dihydroxy-3-methylpentanoate (2,3-dihydroxy-3-methylvalerate) into 2-oxo-3-methylpentanoate (2-oxo-3-methylvalerate) and of (2R)-2,3-dihydroxy-3-methylbutanoate (2,3-dihydroxyisovalerate) into 2-oxo-3-methylbutanoate (2-oxoisovalerate), the penultimate precursor to L-isoleucine and L-valine, respectively. In Francisella tularensis subsp. novicida (strain U112), this protein is Dihydroxy-acid dehydratase.